The following is a 291-amino-acid chain: Small ribosomal subunit biogenesis GTPase RsgA (291 aa).

The CP-type G domain occupies 63–221; the sequence is KNEIKRPPVS…IADTPGFSAL (159 aa). Residues 112 to 115 and 164 to 172 each bind GTP; these read TKKD and GQSGVGKST. Zn(2+) contacts are provided by Cys245, Cys250, His252, and Cys258.

The protein belongs to the TRAFAC class YlqF/YawG GTPase family. RsgA subfamily. In terms of assembly, monomer. Associates with 30S ribosomal subunit, binds 16S rRNA. Requires Zn(2+) as cofactor.

The protein resides in the cytoplasm. In terms of biological role, one of several proteins that assist in the late maturation steps of the functional core of the 30S ribosomal subunit. Helps release RbfA from mature subunits. May play a role in the assembly of ribosomal proteins into the subunit. Circularly permuted GTPase that catalyzes slow GTP hydrolysis, GTPase activity is stimulated by the 30S ribosomal subunit. This is Small ribosomal subunit biogenesis GTPase RsgA from Staphylococcus saprophyticus subsp. saprophyticus (strain ATCC 15305 / DSM 20229 / NCIMB 8711 / NCTC 7292 / S-41).